A 117-amino-acid polypeptide reads, in one-letter code: DNA-directed RNA polymerase subunit omega (117 aa).

The segment covering 96 to 105 (KEEAEEEAKQ) has biased composition (basic and acidic residues). The disordered stretch occupies residues 96–117 (KEEAEEEAKQKNSRAAKAAAAE). Residues 108-117 (SRAAKAAAAE) show a composition bias toward low complexity.

The protein belongs to the RNA polymerase subunit omega family. In terms of assembly, the RNAP catalytic core consists of 2 alpha, 1 beta, 1 beta' and 1 omega subunit. When a sigma factor is associated with the core the holoenzyme is formed, which can initiate transcription.

It catalyses the reaction RNA(n) + a ribonucleoside 5'-triphosphate = RNA(n+1) + diphosphate. Promotes RNA polymerase assembly. Latches the N- and C-terminal regions of the beta' subunit thereby facilitating its interaction with the beta and alpha subunits. This chain is DNA-directed RNA polymerase subunit omega, found in Lactococcus lactis subsp. cremoris (strain MG1363).